A 968-amino-acid chain; its full sequence is RNA polymerase-associated protein RapA (968 aa).

The Helicase ATP-binding domain maps to 164-334 (DVGRRHAPRV…FARLRLLDPN (171 aa)). ATP is bound at residue 177 to 184 (DEVGLGKT). Residues 280–283 (DEAH) carry the DEAH box motif. A Helicase C-terminal domain is found at 490 to 662 (RVEWLMGYLT…YLASPDQTEG (173 aa)).

This sequence belongs to the SNF2/RAD54 helicase family. RapA subfamily. In terms of assembly, interacts with the RNAP. Has a higher affinity for the core RNAP than for the holoenzyme. Its ATPase activity is stimulated by binding to RNAP.

Its function is as follows. Transcription regulator that activates transcription by stimulating RNA polymerase (RNAP) recycling in case of stress conditions such as supercoiled DNA or high salt concentrations. Probably acts by releasing the RNAP, when it is trapped or immobilized on tightly supercoiled DNA. Does not activate transcription on linear DNA. Probably not involved in DNA repair. The sequence is that of RNA polymerase-associated protein RapA from Shigella dysenteriae serotype 1 (strain Sd197).